The primary structure comprises 325 residues: Elongation factor P--(R)-beta-lysine ligase (325 aa).

76-78 (SPE) is a binding site for substrate. ATP-binding positions include 100-102 (RNE) and Asn-109. Tyr-118 contacts substrate. 244-245 (EL) contributes to the ATP binding site. Glu-251 contacts substrate. Gly-300 provides a ligand contact to ATP.

It belongs to the class-II aminoacyl-tRNA synthetase family. EpmA subfamily. As to quaternary structure, homodimer.

The catalysed reaction is D-beta-lysine + L-lysyl-[protein] + ATP = N(6)-((3R)-3,6-diaminohexanoyl)-L-lysyl-[protein] + AMP + diphosphate + H(+). In terms of biological role, with EpmB is involved in the beta-lysylation step of the post-translational modification of translation elongation factor P (EF-P). Catalyzes the ATP-dependent activation of (R)-beta-lysine produced by EpmB, forming a lysyl-adenylate, from which the beta-lysyl moiety is then transferred to the epsilon-amino group of a conserved specific lysine residue in EF-P. This Sodalis glossinidius (strain morsitans) protein is Elongation factor P--(R)-beta-lysine ligase.